Consider the following 187-residue polypeptide: Ribonuclease HII (187 aa).

The RNase H type-2 domain occupies 1–187 (MIILGIDEAG…YKPVQVLLNE (187 aa)). A divalent metal cation contacts are provided by Asp-7, Glu-8, and Asp-99.

It belongs to the RNase HII family. Requires Mn(2+) as cofactor. Mg(2+) is required as a cofactor.

It is found in the cytoplasm. The enzyme catalyses Endonucleolytic cleavage to 5'-phosphomonoester.. Functionally, endonuclease that specifically degrades the RNA of RNA-DNA hybrids. This Francisella tularensis subsp. tularensis (strain FSC 198) protein is Ribonuclease HII.